The sequence spans 198 residues: Small ribosomal subunit protein eS1 (198 aa).

This sequence belongs to the eukaryotic ribosomal protein eS1 family.

The protein is Small ribosomal subunit protein eS1 of Methanospirillum hungatei JF-1 (strain ATCC 27890 / DSM 864 / NBRC 100397 / JF-1).